Reading from the N-terminus, the 878-residue chain is NUT family member 2A (878 aa).

Disordered stretches follow at residues 273-324 (WSQG…DDSC), 417-566 (QKSQ…LSYT), 627-757 (KEKQ…EEEE), and 775-878 (WLPQ…RCSQ). Composition is skewed to pro residues over residues 278 to 288 (PLPPPPPPAAQ) and 427 to 444 (CLPP…PPAP). Over residues 476–487 (TKARRPPPRPHR) the composition is skewed to basic residues. Residues 537–551 (EPEKQREEGEVKQPQ) show a composition bias toward basic and acidic residues.

Belongs to the NUT family.

This is NUT family member 2A (NUTM2A) from Homo sapiens (Human).